A 401-amino-acid chain; its full sequence is Protein nanos (401 aa).

The interval 181–207 (LGRMSYGSAPPQVQMPPQQQHQQQQGL) is disordered. Residues 190–205 (PPQVQMPPQQQHQQQQ) are compositionally biased toward low complexity. A Nanos-type zinc finger spans residues 318-372 (HCVFCENNNEPEAVINSHSVRDNFNRVLCPKLRTYVCPICGASGDSAHTIKYCPK). Cys-319, Cys-322, His-335, Cys-346, Cys-354, Cys-357, His-365, and Cys-370 together coordinate Zn(2+). Short sequence motifs (C2HC) lie at residues 319–346 (CVFC…RVLC) and 354–370 (CPIC…IKYC).

Belongs to the nanos family. As to quaternary structure, interacts with pum and brat. Interacts with cup. Interacts with mei-P26; possibly involved in regulation of brat levels. Interacts with wh; may be involved in mei-P26-dependent derepression of the BMP signaling pathway. Acts via the formation of a quaternary complex composed of pum, nanos, brat and the 3'-UTR mRNA of hb. Binds RNA with no specificity. In terms of tissue distribution, posterior part of the embryo. While the transcript is present throughout the embryo, nanos translation is controlled by smg, and the protein is found in pole plasm and pole cells. In the female ovary expressed in germline stem cells, precystoblasts and in maturing cystoblasts; in early cystoblasts expression is post-transcriptionally repressed by bam in a 3'UTR-dependent manner.

Its subcellular location is the cytoplasm. The protein resides in the cytoplasmic ribonucleoprotein granule. Maternal RNA-binding protein that is required for germ cells proliferation and self-renewal. Acts by forming a complex with pum and brat that regulates translation and mRNA stability. The complex binds to the Nanos Response Element (NRE), a 16 bp sequence in the hb mRNA 3'-UTR and prevents its translation. Controls posterior development. Rescuing factor for the abdominal defect of posterior group mutants. The other posterior group genes are not required for nanos function but rather play a role in localization or distribution of nanos protein. This is Protein nanos from Drosophila melanogaster (Fruit fly).